The chain runs to 430 residues: Tyrosine--tRNA ligase (430 aa).

Tyr32 contacts L-tyrosine. A 'HIGH' region motif is present at residues 37-46; it reads PTADSLHIGH. The L-tyrosine site is built by Tyr172 and Gln176. Positions 232–236 match the 'KMSKS' region motif; that stretch reads KFGKT. Lys235 is an ATP binding site. An S4 RNA-binding domain is found at 362–429; that stretch reads VKAVDLFVDN…GKKNYYLIIA (68 aa).

The protein belongs to the class-I aminoacyl-tRNA synthetase family. TyrS type 1 subfamily. In terms of assembly, homodimer.

Its subcellular location is the cytoplasm. The catalysed reaction is tRNA(Tyr) + L-tyrosine + ATP = L-tyrosyl-tRNA(Tyr) + AMP + diphosphate + H(+). Its function is as follows. Catalyzes the attachment of tyrosine to tRNA(Tyr) in a two-step reaction: tyrosine is first activated by ATP to form Tyr-AMP and then transferred to the acceptor end of tRNA(Tyr). The sequence is that of Tyrosine--tRNA ligase from Bacteroides fragilis (strain YCH46).